Consider the following 117-residue polypeptide: Probable non-functional immunoglobulin heavy variable 3-16 (117 aa).

The N-terminal stretch at 1-19 (MEFGLSWVFLAGILKGVQC) is a signal peptide. The segment at 20 to 44 (EVQLVESGGGLVQPGGSLRLSCAAS) is framework-1. In terms of domain architecture, Ig-like spans 21-117 (VQLVESGGGL…EDMAVYYCVR (97 aa)). Cysteine 41 and cysteine 115 are oxidised to a cystine. A complementarity-determining-1 region spans residues 45–52 (GFTFSNSD). Positions 53–69 (MNWARKAPGKGLEWVSG) are framework-2. The interval 70–77 (VSWNGSRT) is complementarity-determining-2. Asparagine 73 carries N-linked (GlcNAc...) asparagine glycosylation. Residues 78–115 (HYVDSVKRRFIISRDNSRNSLYLQKNRRRAEDMAVYYC) form a framework-3 region. The segment at 116 to 117 (VR) is complementarity-determining-3.

Immunoglobulins are composed of two identical heavy chains and two identical light chains; disulfide-linked.

The protein localises to the secreted. It localises to the cell membrane. Its function is as follows. Probable non-functional open reading frame (ORF) of V region of the variable domain of immunoglobulin heavy chains. Non-functional ORF generally cannot participate in the synthesis of a productive immunoglobulin chain due to altered V-(D)-J or switch recombination and/or splicing site (at mRNA level) and/or conserved amino acid change (protein level). Immunoglobulins, also known as antibodies, are membrane-bound or secreted glycoproteins produced by B lymphocytes. In the recognition phase of humoral immunity, the membrane-bound immunoglobulins serve as receptors which, upon binding of a specific antigen, trigger the clonal expansion and differentiation of B lymphocytes into immunoglobulins-secreting plasma cells. Secreted immunoglobulins mediate the effector phase of humoral immunity, which results in the elimination of bound antigens. The antigen binding site is formed by the variable domain of one heavy chain, together with that of its associated light chain. Thus, each immunoglobulin has two antigen binding sites with remarkable affinity for a particular antigen. The variable domains are assembled by a process called V-(D)-J rearrangement and can then be subjected to somatic hypermutations which, after exposure to antigen and selection, allow affinity maturation for a particular antigen. In Homo sapiens (Human), this protein is Probable non-functional immunoglobulin heavy variable 3-16.